A 660-amino-acid chain; its full sequence is Peroxisomal acyl-coenzyme A oxidase 1 (660 aa).

Ser-26 carries the phosphoserine modification. N6-succinyllysine occurs at positions 89 and 90. The FAD site is built by Thr-139 and Gly-178. Position 216 is an N6-acetyllysine (Lys-216). An N6-succinyllysine modification is found at Lys-241. N6-acetyllysine occurs at positions 255, 267, and 272. Lys-349 is modified (N6-succinyllysine). Glu-421 acts as the Proton acceptor in catalysis. N6-acetyllysine; alternate is present on residues Lys-437 and Lys-446. Lys-437 and Lys-446 each carry N6-succinyllysine; alternate. An N6-acetyllysine modification is found at Lys-500. Lys-512 carries the post-translational modification N6-acetyllysine; alternate. Lys-512 bears the N6-succinyllysine; alternate mark. Lys-542 is subject to N6-succinyllysine. Lys-637 carries the N6-acetyllysine; alternate modification. The residue at position 637 (Lys-637) is an N6-succinyllysine; alternate. Lys-643 carries the N6-succinyllysine modification. At Ser-649 the chain carries Phosphoserine. N6-acetyllysine is present on Lys-651. At Lys-654 the chain carries N6-succinyllysine. A Microbody targeting signal motif is present at residues 658 to 660 (SKL).

Belongs to the acyl-CoA oxidase family. Homodimer. Interacts with LONP2. FAD serves as cofactor.

The protein localises to the peroxisome. It carries out the reaction a 2,3-saturated acyl-CoA + O2 = a (2E)-enoyl-CoA + H2O2. It catalyses the reaction hexadecanoyl-CoA + O2 = (2E)-hexadecenoyl-CoA + H2O2. The enzyme catalyses dodecanoyl-CoA + O2 = (2E)-dodecenoyl-CoA + H2O2. The catalysed reaction is octanoyl-CoA + O2 = (2E)-octenoyl-CoA + H2O2. It carries out the reaction decanoyl-CoA + O2 = (2E)-decenoyl-CoA + H2O2. It catalyses the reaction tetradecanoyl-CoA + O2 = (2E)-tetradecenoyl-CoA + H2O2. The enzyme catalyses hexadecanedioyl-CoA + O2 = (2E)-hexadecenedioyl-CoA + H2O2. The catalysed reaction is tetracosanoyl-CoA + O2 = (2E)-tetracosenoyl-CoA + H2O2. It carries out the reaction glutaryl-CoA + O2 = (2E)-glutaconyl-CoA + H2O2. It catalyses the reaction hexanoyl-CoA + O2 = (2E)-hexenoyl-CoA + H2O2. The enzyme catalyses octadecanoyl-CoA + O2 = (2E)-octadecenoyl-CoA + H2O2. The catalysed reaction is (5Z,8Z,11Z,14Z,17Z)-eicosapentaenoyl-CoA + O2 = (2E,5Z,8Z,11Z,14Z,17Z)-icosahexaenoyl-CoA + H2O2. It carries out the reaction (6Z,9Z,12Z,15Z,18Z,21Z)-tetracosahexaenoyl-CoA + O2 = (2E,6Z,9Z,12Z,15Z,18Z,21Z)-tetracosaheptaenoyl-CoA + H2O2. The protein operates within lipid metabolism; peroxisomal fatty acid beta-oxidation. Its function is as follows. Involved in the initial and rate-limiting step of peroxisomal beta-oxidation of straight-chain saturated and unsaturated very-long-chain fatty acids. Catalyzes the desaturation of fatty acyl-CoAs such as palmitoyl-CoA (hexadecanoyl-CoA) to 2-trans-enoyl-CoAs ((2E)-enoyl-CoAs) such as (2E)-hexadecenoyl-CoA, and donates electrons directly to molecular oxygen (O(2)), thereby producing hydrogen peroxide (H(2)O(2)). Shows highest activity against medium-chain fatty acyl-CoAs. Shows optimum activity with a chain length of 10 carbons (decanoyl-CoA) in vitro. Functionally, is active against a much broader range of substrates and shows activity towards long-chain acyl-CoAs. The polypeptide is Peroxisomal acyl-coenzyme A oxidase 1 (Pongo abelii (Sumatran orangutan)).